The sequence spans 440 residues: Murein DD-endopeptidase MepM (440 aa).

The helical transmembrane segment at Val21 to Val40 threads the bilayer. The LysM domain occupies His96 to Trp141. Residue His314 participates in Zn(2+) binding.

This sequence belongs to the peptidase M23B family. It depends on Zn(2+) as a cofactor.

It is found in the cell membrane. The protein operates within cell wall biogenesis; cell wall polysaccharide biosynthesis. Functionally, a murein DD-endopeptidase with specificity for D-Ala-meso-diaminopimelic acid (mDAP) cross-links. Its role is probably to cleave D-Ala-mDAP cross-links to allow insertion of new glycans and thus cell wall expansion. Functionally redundant with MepM and MepH. The chain is Murein DD-endopeptidase MepM (mepM) from Escherichia coli O6:H1 (strain CFT073 / ATCC 700928 / UPEC).